A 360-amino-acid chain; its full sequence is DNA replication and repair protein RecF (360 aa).

Gly-30–Thr-37 contributes to the ATP binding site.

The protein belongs to the RecF family.

The protein resides in the cytoplasm. Functionally, the RecF protein is involved in DNA metabolism; it is required for DNA replication and normal SOS inducibility. RecF binds preferentially to single-stranded, linear DNA. It also seems to bind ATP. The protein is DNA replication and repair protein RecF of Actinobacillus pleuropneumoniae serotype 7 (strain AP76).